A 343-amino-acid chain; its full sequence is Signal peptide peptidase 2 (343 aa).

Over 1-19 the chain is Lumenal; sequence MKTHERAANLALAGLSLAP. Residues 20–40 form a helical membrane-spanning segment; sequence LVVKVNPNANVILTACLAVYV. Residues 41-62 are Cytoplasmic-facing; it reads GCYRSVKPTPPAETMSKEHAMR. The chain crosses the membrane as a helical span at residues 63 to 83; the sequence is FPLVGSAMLLSLFLLFKFLSK. Over 84 to 89 the chain is Lumenal; that stretch reads DLVNTV. Residues 90-110 traverse the membrane as a helical segment; it reads LTAYFFILGIAALCATLLPSI. The Cytoplasmic portion of the chain corresponds to 111–141; that stretch reads KRFLPKEWNDNAIVWRAPLFHSLSVEFTRSQ. Residues 142–162 traverse the membrane as a helical segment; it reads VVASIPGFFFCIWYAAKKHWL. The Lumenal portion of the chain corresponds to 163–165; sequence ANN. The helical transmembrane segment at 166–186 threads the bilayer; it reads VLGISFCIQGIEMLSLGSFKT. Residues 187–188 lie on the Cytoplasmic side of the membrane; sequence GA. A helical transmembrane segment spans residues 189 to 209; sequence ILLSGLFFYDIFWVFFTPVMV. Residue Asp198 is part of the active site. The Lumenal portion of the chain corresponds to 210 to 230; that stretch reads SVAKSFDAPIKLLFPTGDAAR. The chain crosses the membrane as a helical span at residues 231–251; sequence PFSMLGLGDIVIPGIFVALAL. The active site involves Asp239. The Cytoplasmic segment spans residues 252–266; the sequence is RFDVSRGIKNRYFNS. The chain crosses the membrane as a helical span at residues 267-287; that stretch reads AFLGYTVGLTVTIIVMNWFQA. Topologically, residues 288-290 are lumenal; that stretch reads AQP. The PAL signature appears at 290–292; it reads PAL. Residues 291-311 traverse the membrane as a helical segment; sequence ALLYIVPGVIGFVAVHCLWNG. The Cytoplasmic segment spans residues 312 to 343; it reads EVKPLLEYNESKAEEEEACEEDTDSKQNKKKE. Over residues 324 to 334 the composition is skewed to acidic residues; that stretch reads AEEEEACEEDT. The disordered stretch occupies residues 324 to 343; it reads AEEEEACEEDTDSKQNKKKE. The Endoplasmic reticulum targeting signal signature appears at 340–343; the sequence is KKKE.

This sequence belongs to the peptidase A22B family. As to expression, ubiquitous.

Its subcellular location is the endoplasmic reticulum membrane. Functionally, intramembrane-cleaving aspartic protease (I-CLiP) that cleaves type II membrane signal peptides in the hydrophobic plane of the membrane. Catalyzes intramembrane proteolysis of some signal peptides after they have been cleaved from a preprotein, resulting in the release of the fragment from the ER membrane into the cytoplasm. In Oryza sativa subsp. japonica (Rice), this protein is Signal peptide peptidase 2 (SPP2).